Here is a 270-residue protein sequence, read N- to C-terminus: MVRVGIIGGSGLYELLENPRIVRLDTPFGHCDVQLGELAGEEVAFIPRHGASHRLPPYKVNYKANLYALNMLEVERIIATNAVGSINPALEPGTIVIPHDFIDMTKCRDVTFYDGETTIKVRGREVSGVVHVSMTPYTYCPEIRASIIEAAEHMGLGVRDGGVYVCTEGNRFETPAEIRAFSILGGDIVGMTGCPEASLARELAICYASISVVTNYAAGVSGAVKLTQGEVIEIFSRKIQDISRLIEETIRRIPKRRECPCKDALSEYLK.

Phosphate-binding positions include S10 and 48-49 (RH). M191 serves as a coordination point for substrate. Position 192 (T192) interacts with phosphate. 215–217 (NYA) is a substrate binding site.

The protein belongs to the PNP/MTAP phosphorylase family. MTAP subfamily. As to quaternary structure, homohexamer. Dimer of a homotrimer.

It carries out the reaction a purine D-ribonucleoside + phosphate = a purine nucleobase + alpha-D-ribose 1-phosphate. Its pathway is purine metabolism; purine nucleoside salvage. Its function is as follows. Purine nucleoside phosphorylase which is highly specific for 6-oxopurine nucleosides. Cleaves guanosine or inosine to respective bases and sugar-1-phosphate molecules. Involved in purine salvage. The sequence is that of Probable 6-oxopurine nucleoside phosphorylase from Korarchaeum cryptofilum (strain OPF8).